The sequence spans 231 residues: Septum site-determining protein MinC (231 aa).

Belongs to the MinC family. As to quaternary structure, interacts with MinD and FtsZ.

Functionally, cell division inhibitor that blocks the formation of polar Z ring septums. Rapidly oscillates between the poles of the cell to destabilize FtsZ filaments that have formed before they mature into polar Z rings. Prevents FtsZ polymerization. The chain is Septum site-determining protein MinC from Shigella flexneri.